A 654-amino-acid chain; its full sequence is Protein THALLO (654 aa).

Residues 1–16 show a composition bias toward basic residues; that stretch reads MGKKGGTLKRSSKSTK. Disordered regions lie at residues 1-23, 35-145, and 164-212; these read MGKKGGTLKRSSKSTKTRKDIVE, KQRD…SDDE, and SITA…KDTH. The short motif at 2-9 is the Nuclear localization signal 1 element; the sequence is GKKGGTLK. Acidic residues-rich tracts occupy residues 44–56, 64–82, and 103–114; these read VNDDTDESDEDDV, GVDDESEEDEDTEDEEEAE, and GDDEMADDDKDK. Positions 140 to 160 form a coiled coil; it reads LSSDDEDIKAEEEEVIRLRAE. The span at 171–181 shows a compositional bias: acidic residues; that stretch reads GLDDDSEEDSD. The span at 182 to 212 shows a compositional bias: basic and acidic residues; the sequence is RELTMEEISDKGKQATKSITDKKEKGDKDTH. A coiled-coil region spans residues 243–263; that stretch reads LSELNDAVEELESKINPVMNK. Disordered regions lie at residues 362–397, 470–492, and 509–654; these read SDSVDRITQDTAKPMKIDNAREEKKKKGEKRKHQND, VSTKRKPKTISGDDDLPQRDDIG, and KSSE…SIRM. A compositionally biased stretch (basic and acidic residues) spans 364–387; that stretch reads SVDRITQDTAKPMKIDNAREEKKK. Residues 524–546 are compositionally biased toward acidic residues; it reads SDDEDDNDGDNNDMVDNDGESED. Over residues 552–561 the composition is skewed to basic residues; sequence VKQKQQAKRA. Over residues 588–599 the composition is skewed to polar residues; the sequence is SNQMVSNRGLTR. The Nuclear localization signal 2 motif lies at 608 to 615; the sequence is PRKKYRKN. The segment covering 645-654 has biased composition (polar residues); the sequence is NPNTSRSIRM.

Belongs to the SAS10 family. As to quaternary structure, interacts with NUCL1, NUCL2, JMJ14, NOF1 and MPP10 in the nucleus. In terms of tissue distribution, mainly present in tissues undergoing rapid cellular growth and differentiation. Mostly expressed in shoots and flowers, and, to a lower extent, in leaves, siliques, roots and seedlings.

The protein localises to the nucleus. The protein resides in the nucleolus. Essential protein during embryogenesis. Involved both in gene transcription regulation and in processing events critical for proper rRNA biogenesis and nucleolar organization during reproduction; contributes to pre-rRNA processing at the 5' external transcribed spacer. Binds RNA. The sequence is that of Protein THALLO from Arabidopsis thaliana (Mouse-ear cress).